Here is a 434-residue protein sequence, read N- to C-terminus: MTDFSPREIVSELDRFIVGQHDAKRAVSIALRNRWRRLQLEGSLREEVLPKNILMIGPTGVGKTEIARRLAKLAGAPFIKVEATKFTEVGYVGRDVEQIIRDLVEVAISQVREKKRKDVEARAQIAAEERVLDALVGANSSATTRDSFRKKLRAGELNDKEIEVETQSTGGGSPMFEIPGMPGAQMGAISLGDIFGKMGGRTKTRRLTVEDSHELLVNEEADKLLDSDQLVQEAINAVENNGIVFLDEIDKICVRDGRSGGEVSREGVQRDLLPLIEGTTVSTKHGAVKTDHILFIASGAFHIAKPSDLLPELQGRLPIRVELSALTRDDMRRILTEPEASLIKQYVALLQTEGVTLEITDEAIDALADVAVAVNSSVENIGARRLQTVMERVLDEISFTAPDRDGETIQVDAAYVQKHVGDLAKNADLSRFIL.

Residues V18, 60–65 (GVGKTE), D247, E312, and R384 contribute to the ATP site.

This sequence belongs to the ClpX chaperone family. HslU subfamily. A double ring-shaped homohexamer of HslV is capped on each side by a ring-shaped HslU homohexamer. The assembly of the HslU/HslV complex is dependent on binding of ATP.

The protein resides in the cytoplasm. In terms of biological role, ATPase subunit of a proteasome-like degradation complex; this subunit has chaperone activity. The binding of ATP and its subsequent hydrolysis by HslU are essential for unfolding of protein substrates subsequently hydrolyzed by HslV. HslU recognizes the N-terminal part of its protein substrates and unfolds these before they are guided to HslV for hydrolysis. This chain is ATP-dependent protease ATPase subunit HslU, found in Rhodopseudomonas palustris (strain BisB18).